The following is a 256-amino-acid chain: Cell division protein FtsQ (256 aa).

Residues 1-23 (MIKAVKMNTSFDKEKVRKHLPGA) lie on the Cytoplasmic side of the membrane. Residues 24 to 44 (IFLSLVVITSLWLVISTISWM) traverse the membrane as a helical segment. The Periplasmic portion of the chain corresponds to 45–256 (TDEDRLPLSH…SDDVENKEEN (212 aa)). The region spanning 50-120 (LPLSHMIIQG…ETIKVFVVEH (71 aa)) is the POTRA domain.

It belongs to the FtsQ/DivIB family. FtsQ subfamily. In terms of assembly, part of a complex composed of FtsB, FtsL and FtsQ.

The protein localises to the cell inner membrane. Essential cell division protein. May link together the upstream cell division proteins, which are predominantly cytoplasmic, with the downstream cell division proteins, which are predominantly periplasmic. May control correct divisome assembly. The sequence is that of Cell division protein FtsQ from Aliivibrio fischeri (strain ATCC 700601 / ES114) (Vibrio fischeri).